Consider the following 154-residue polypeptide: NAD(P)H-quinone oxidoreductase subunit N (154 aa).

Belongs to the complex I NdhN subunit family. As to quaternary structure, NDH-1 can be composed of about 15 different subunits; different subcomplexes with different compositions have been identified which probably have different functions.

It localises to the cellular thylakoid membrane. It catalyses the reaction a plastoquinone + NADH + (n+1) H(+)(in) = a plastoquinol + NAD(+) + n H(+)(out). The catalysed reaction is a plastoquinone + NADPH + (n+1) H(+)(in) = a plastoquinol + NADP(+) + n H(+)(out). Its function is as follows. NDH-1 shuttles electrons from an unknown electron donor, via FMN and iron-sulfur (Fe-S) centers, to quinones in the respiratory and/or the photosynthetic chain. The immediate electron acceptor for the enzyme in this species is believed to be plastoquinone. Couples the redox reaction to proton translocation, and thus conserves the redox energy in a proton gradient. Cyanobacterial NDH-1 also plays a role in inorganic carbon-concentration. The protein is NAD(P)H-quinone oxidoreductase subunit N of Prochlorococcus marinus (strain NATL2A).